The sequence spans 53 residues: UPF0391 membrane protein BURPS1106A_A2993 (53 aa).

2 helical membrane-spanning segments follow: residues alanine 5–alanine 25 and isoleucine 30–valine 50.

This sequence belongs to the UPF0391 family.

It localises to the cell membrane. In Burkholderia pseudomallei (strain 1106a), this protein is UPF0391 membrane protein BURPS1106A_A2993.